A 683-amino-acid polypeptide reads, in one-letter code: Cyclic nucleotide-gated channel alpha-1 (683 aa).

The Cytoplasmic portion of the chain corresponds to 1–160; sequence MKTNIINTWH…PSGNMYYNWL (160 aa). A disordered region spans residues 34-144; the sequence is ACSSFSDNDN…PKEKKEEEKK (111 aa). The span at 105–144 shows a compositional bias: basic and acidic residues; that stretch reads SKADDKKESKKDPEKKKKKEKEKEKKKEEKPKEKKEEEKK. Residues 161–182 form a helical membrane-spanning segment; it reads FCITLPVMYNWTMIIARACFDE. Topologically, residues 183-192 are extracellular; it reads LQSDYLEYWL. Residues 193–213 form a helical membrane-spanning segment; it reads IFDYVSDVVYLADMFVRTRTG. The Cytoplasmic segment spans residues 214–238; that stretch reads YLEQGLLVKDELKLIEKYKANLQFK. Residues 239–257 form a helical membrane-spanning segment; sequence LDVLSVIPTDLLYFKFGWN. Residues 258–262 are Extracellular-facing; it reads YPEIR. A helical membrane pass occupies residues 263–281; the sequence is LNRLLRISRMFEFFQRTET. Over 282-288 the chain is Cytoplasmic; that stretch reads RTNYPNI. Residues 286-394 are ion conduction pathway; sequence PNIFRISNLV…GNIGSMISNM (109 aa). A helical membrane pass occupies residues 289–312; the sequence is FRISNLVMYIVIIIHWNACVYYSI. Residues 313-335 lie on the Extracellular side of the membrane; sequence SKAIGFGNDTWVYPDVNDPEFGR. Asn320 carries an N-linked (GlcNAc...) asparagine glycan. Helical transmembrane passes span 336–370 and 371–395; these read LARK…VFVV and VDFL…SNMN. Positions 353-356 are selectivity filter; that stretch reads TIGE. The interval 396–472 is C-linker; that stretch reads AARAEFQSRV…DTLKKVRIFA (77 aa). Topologically, residues 396–683 are cytoplasmic; that stretch reads AARAEFQSRV…ESEPTESLQG (288 aa). The cyclic nucleotide-binding domain stretch occupies residues 476–596; the sequence is AGLLVELVLK…EEKGRQILMK (121 aa). Positions 536, 539, 552, and 553 each coordinate 3',5'-cyclic GMP. The 3',5'-cyclic AMP site is built by Arg552 and Thr553. Residues 614–668 adopt a coiled-coil conformation; sequence LEEKVTRMEGSVDLLQTRFARILAEYESMQQKLKQRLTKVEKFLKPLIETEFSAL.

This sequence belongs to the cyclic nucleotide-gated cation channel (TC 1.A.1.5) family. CNGA1 subfamily. As to quaternary structure, forms heterotetrameric channels composed of CNGA1 and CNGB1 subunits with 3:1 stoichiometry. May also form cyclic nucleotide-activated homotetrameric channels, that are efficiently activated by saturating cGMP, but poorly activated by saturating cAMP compared to the heterotetramer with CNGB1. The channel binds Ca(2+)-bound CALM1 via CaM1 and CaM2 regions of the CNGB1 subunit; this interaction modulates the affinity of the channel for cNMPs in response to intracellular Ca(2+) levels. As to expression, rod cells in the retina.

It is found in the cell membrane. The enzyme catalyses Ca(2+)(in) = Ca(2+)(out). The catalysed reaction is Na(+)(in) = Na(+)(out). It carries out the reaction K(+)(in) = K(+)(out). It catalyses the reaction NH4(+)(in) = NH4(+)(out). The enzyme catalyses Rb(+)(in) = Rb(+)(out). The catalysed reaction is Li(+)(in) = Li(+)(out). It carries out the reaction Cs(+)(in) = Cs(+)(out). Its function is as follows. Pore-forming subunit of the rod cyclic nucleotide-gated channel. Mediates rod photoresponses at dim light converting transient changes in intracellular cGMP levels into electrical signals. In the dark, cGMP levels are high and keep the channel open enabling a steady inward current carried by Na(+) and Ca(2+) ions that leads to membrane depolarization and neurotransmitter release from synaptic terminals. Upon photon absorption cGMP levels decline leading to channel closure and membrane hyperpolarization that ultimately slows neurotransmitter release and signals the presence of light, the end point of the phototransduction cascade. Conducts cGMP- and cAMP-gated ion currents, with permeability for monovalent and divalent cations. The selectivity for Ca(2+) over Na(+) increases with cGMP concentrations, whereas the selectivity among monovalent ions is independent of the cGMP levels. This Rattus norvegicus (Rat) protein is Cyclic nucleotide-gated channel alpha-1.